Here is a 108-residue protein sequence, read N- to C-terminus: Ig light chain C region (108 aa).

The region spanning 7–102 is the Ig-like domain; that stretch reads PTVSIYCPSL…LTPALAKSFQ (96 aa). Intrachain disulfides connect C13-C106 and C28-C86.

This chain is Ig light chain C region, found in Aquarana catesbeiana (American bullfrog).